A 654-amino-acid polypeptide reads, in one-letter code: Arrestin domain-containing protein C (654 aa).

Positions 1-105 (MTQRSLKINI…AKRNLMDQWL (105 aa)) constitute a C2 domain. A coiled-coil region spans residues 616 to 647 (AKRIFLKIQQIQSERQKQQEQQEQQVVSNLEA).

Belongs to the arrestin family.

This chain is Arrestin domain-containing protein C (adcC), found in Dictyostelium discoideum (Social amoeba).